The sequence spans 470 residues: UDP-N-acetylmuramate--L-alanine ligase (470 aa).

G118–T124 is an ATP binding site.

The protein belongs to the MurCDEF family.

It is found in the cytoplasm. It catalyses the reaction UDP-N-acetyl-alpha-D-muramate + L-alanine + ATP = UDP-N-acetyl-alpha-D-muramoyl-L-alanine + ADP + phosphate + H(+). It participates in cell wall biogenesis; peptidoglycan biosynthesis. Its function is as follows. Cell wall formation. This chain is UDP-N-acetylmuramate--L-alanine ligase, found in Cereibacter sphaeroides (strain KD131 / KCTC 12085) (Rhodobacter sphaeroides).